Reading from the N-terminus, the 1453-residue chain is DNA-directed RNA polymerase IV subunit 1 (1453 aa).

Zn(2+)-binding residues include Cys-56, Cys-59, Cys-67, His-70, Cys-97, Cys-100, and Cys-121. Mg(2+)-binding residues include Asp-447, Asp-449, and Asp-451. Residues 806–818 (PLESFVHSVTSRD) are bridging helix.

Belongs to the RNA polymerase beta' chain family. In terms of assembly, component of the RNA polymerase IV complex. Interacts with NRPD2, NRPD3, NRPD3B, NRPD4, NRPD5, NRPD5B, NRPD6A, NRPD7, NRPD7B, NRPD9A, NRPD9B, NRPD10, NRPD11, NRPD12, RDR2, RDM4, CLSY1, CLSY2, CLSY3, CLSY4 and SHH1. In terms of tissue distribution, mostly expressed in flowers, and, to a lower extent, in leaves.

The protein resides in the nucleus. The enzyme catalyses RNA(n) + a ribonucleoside 5'-triphosphate = RNA(n+1) + diphosphate. DNA-dependent RNA polymerase catalyzes the transcription of DNA into RNA using the four ribonucleoside triphosphates as substrates. Largest and catalytic component of RNA polymerase IV which mediates 24-nt short-interfering RNAs (siRNA) accumulation. Implicated in siRNA-directed heterochromatin formation through the action of DCL3 and AGO4, and subsequent DNA methylation-dependent silencing of targeted sequences. Essential component of a self-reinforcing loop coupling de novo DNA methylation to siRNA production. Required for intercellular but not intracellular RNA interference (RNAi) leading to systemic post-transcriptional gene silencing. Involved in the maintenance of post-transcriptional RNA silencing. In Arabidopsis thaliana (Mouse-ear cress), this protein is DNA-directed RNA polymerase IV subunit 1 (NRPD1).